Here is a 226-residue protein sequence, read N- to C-terminus: UPF0758 protein SPJ_1027 (226 aa).

The region spanning 103–225 (SILSSQKLAK…YFSYREKTDL (123 aa)) is the MPN domain. The Zn(2+) site is built by His-174, His-176, and Asp-187. The JAMM motif motif lies at 174-187 (HNHPSGAVAPSQND).

The protein belongs to the UPF0758 family.

The protein is UPF0758 protein SPJ_1027 of Streptococcus pneumoniae (strain JJA).